The chain runs to 262 residues: Sepiapterin reductase (262 aa).

M1 bears the N-acetylmethionine mark. G15–G21 contributes to the NADP(+) binding site. Position 33 is a phosphoserine (S33). R43–S44 serves as a coordination point for NADP(+). Residue S46 is modified to Phosphoserine; by CaMK2; in vitro. Residue D70 to L71 participates in NADP(+) binding. Substrate contacts are provided by residues S158–L159 and Y171. K175 contributes to the NADP(+) binding site. S196 is subject to Phosphoserine; by CaMK2; in vitro. G200 contacts substrate. L202 to Q207 is an NADP(+) binding site. Phosphoserine; by CaMK2; in vitro is present on S214. D258 contacts substrate.

The protein belongs to the sepiapterin reductase family. As to quaternary structure, homodimer. Post-translationally, in vitro phosphorylation of Ser-46, Ser-196 and Ser-214 by CaMK2 does not change kinetic parameters.

It localises to the cytoplasm. The enzyme catalyses L-erythro-7,8-dihydrobiopterin + NADP(+) = L-sepiapterin + NADPH + H(+). The catalysed reaction is (6R)-L-erythro-5,6,7,8-tetrahydrobiopterin + 2 NADP(+) = 6-pyruvoyl-5,6,7,8-tetrahydropterin + 2 NADPH + 2 H(+). Functionally, catalyzes the final one or two reductions in tetra-hydrobiopterin biosynthesis to form 5,6,7,8-tetrahydrobiopterin. The polypeptide is Sepiapterin reductase (Spr) (Rattus norvegicus (Rat)).